A 264-amino-acid chain; its full sequence is Thiazole synthase (264 aa).

Lysine 106 acts as the Schiff-base intermediate with DXP in catalysis. 1-deoxy-D-xylulose 5-phosphate is bound by residues glycine 167, 193–194 (AG), and 215–216 (NS).

Belongs to the ThiG family. As to quaternary structure, homotetramer. Forms heterodimers with either ThiH or ThiS.

It localises to the cytoplasm. The catalysed reaction is [ThiS sulfur-carrier protein]-C-terminal-Gly-aminoethanethioate + 2-iminoacetate + 1-deoxy-D-xylulose 5-phosphate = [ThiS sulfur-carrier protein]-C-terminal Gly-Gly + 2-[(2R,5Z)-2-carboxy-4-methylthiazol-5(2H)-ylidene]ethyl phosphate + 2 H2O + H(+). The protein operates within cofactor biosynthesis; thiamine diphosphate biosynthesis. Functionally, catalyzes the rearrangement of 1-deoxy-D-xylulose 5-phosphate (DXP) to produce the thiazole phosphate moiety of thiamine. Sulfur is provided by the thiocarboxylate moiety of the carrier protein ThiS. In vitro, sulfur can be provided by H(2)S. The chain is Thiazole synthase from Pseudomonas savastanoi pv. phaseolicola (strain 1448A / Race 6) (Pseudomonas syringae pv. phaseolicola (strain 1448A / Race 6)).